The primary structure comprises 421 residues: Medium-chain specific acyl-CoA dehydrogenase, mitochondrial (421 aa).

The transit peptide at 1–25 directs the protein to the mitochondrion; the sequence is MAAALRRGYKVLRSVSHFECRAQHT. Lys69 carries the post-translational modification N6-acetyllysine; alternate. Position 69 is an N6-succinyllysine; alternate (Lys69). Lys79 is modified (N6-acetyllysine). 158-167 contributes to the FAD binding site; sequence YCVTEPSAGS. Octanoyl-CoA is bound at residue Ser167. The residue at position 179 (Lys179) is an N6-succinyllysine. Position 191-193 (191-193) interacts with FAD; sequence WIT. Residue Lys212 is modified to N6-acetyllysine; alternate. Position 212 is an N6-succinyllysine; alternate (Lys212). Ser216 provides a ligand contact to octanoyl-CoA. Residues Lys217, Lys259, and Lys271 each carry the N6-acetyllysine; alternate modification. N6-succinyllysine; alternate occurs at positions 217, 259, and 271. 2 residues coordinate octanoyl-CoA: Asp278 and Arg281. At Lys301 the chain carries N6-acetyllysine. FAD is bound by residues 306–308 and 316–317; these read RKT and HQ. Octanoyl-CoA-binding residues include Arg349 and Thr351. The residue at position 351 (Thr351) is a Phosphothreonine. 374-378 lines the FAD pocket; that stretch reads QIFGG. Glu401 contributes to the octanoyl-CoA binding site. The Proton acceptor role is filled by Glu401. 402-405 contributes to the FAD binding site; that stretch reads GTAQ.

Belongs to the acyl-CoA dehydrogenase family. In terms of assembly, homotetramer. Interacts with the heterodimeric electron transfer flavoprotein ETF. FAD is required as a cofactor. In terms of processing, acetylated. Could occur at proximity of the cofactor-binding sites and reduce the catalytic activity. Could be deacetylated by SIRT3.

Its subcellular location is the mitochondrion matrix. The catalysed reaction is a medium-chain 2,3-saturated fatty acyl-CoA + oxidized [electron-transfer flavoprotein] + H(+) = a medium-chain (2E)-enoyl-CoA + reduced [electron-transfer flavoprotein]. It carries out the reaction pentanoyl-CoA + oxidized [electron-transfer flavoprotein] + H(+) = (2E)-pentenoyl-CoA + reduced [electron-transfer flavoprotein]. The enzyme catalyses hexanoyl-CoA + oxidized [electron-transfer flavoprotein] + H(+) = (2E)-hexenoyl-CoA + reduced [electron-transfer flavoprotein]. It catalyses the reaction octanoyl-CoA + oxidized [electron-transfer flavoprotein] + H(+) = (2E)-octenoyl-CoA + reduced [electron-transfer flavoprotein]. The catalysed reaction is decanoyl-CoA + oxidized [electron-transfer flavoprotein] + H(+) = (2E)-decenoyl-CoA + reduced [electron-transfer flavoprotein]. It carries out the reaction dodecanoyl-CoA + oxidized [electron-transfer flavoprotein] + H(+) = (2E)-dodecenoyl-CoA + reduced [electron-transfer flavoprotein]. The enzyme catalyses tetradecanoyl-CoA + oxidized [electron-transfer flavoprotein] + H(+) = (2E)-tetradecenoyl-CoA + reduced [electron-transfer flavoprotein]. It catalyses the reaction oxidized [electron-transfer flavoprotein] + hexadecanoyl-CoA + H(+) = (2E)-hexadecenoyl-CoA + reduced [electron-transfer flavoprotein]. Its pathway is lipid metabolism; mitochondrial fatty acid beta-oxidation. Functionally, medium-chain specific acyl-CoA dehydrogenase is one of the acyl-CoA dehydrogenases that catalyze the first step of mitochondrial fatty acid beta-oxidation, an aerobic process breaking down fatty acids into acetyl-CoA and allowing the production of energy from fats. The first step of fatty acid beta-oxidation consists in the removal of one hydrogen from C-2 and C-3 of the straight-chain fatty acyl-CoA thioester, resulting in the formation of trans-2-enoyl-CoA. Electron transfer flavoprotein (ETF) is the electron acceptor that transfers electrons to the main mitochondrial respiratory chain via ETF-ubiquinone oxidoreductase (ETF dehydrogenase). Among the different mitochondrial acyl-CoA dehydrogenases, medium-chain specific acyl-CoA dehydrogenase acts specifically on acyl-CoAs with saturated 6 to 12 carbons long primary chains. The sequence is that of Medium-chain specific acyl-CoA dehydrogenase, mitochondrial from Rattus norvegicus (Rat).